A 304-amino-acid chain; its full sequence is Probable actin-related protein 2/3 complex subunit 2 (304 aa).

The protein belongs to the ARPC2 family. As to quaternary structure, component of the Arp2/3 complex.

The protein localises to the cytoplasm. It is found in the cytoskeleton. In terms of biological role, functions as actin-binding component of the Arp2/3 complex which is involved in regulation of actin polymerization and together with an activating nucleation-promoting factor (NPF) mediates the formation of branched actin networks. Seems to contact the mother actin filament. The sequence is that of Probable actin-related protein 2/3 complex subunit 2 (Arc-p34) from Anopheles gambiae (African malaria mosquito).